The primary structure comprises 230 residues: uncharacterized protein (230 aa).

Residues 17–37 (AGALSLGIGFFALASALWFLI) form a helical membrane-spanning segment. N-linked (GlcNAc...) asparagine glycosylation is present at asparagine 126.

It is found in the membrane. This is an uncharacterized protein from Mus musculus (Mouse).